The following is a 430-amino-acid chain: Adenylosuccinate synthetase (430 aa).

GTP-binding positions include 13–19 and 41–43; these read GDEGKGK and GHT. Residue D14 is the Proton acceptor of the active site. Mg(2+) is bound by residues D14 and G41. Residues 14 to 17, 39 to 42, T130, R144, Q225, T240, and R304 contribute to the IMP site; these read DEGK and NAGH. H42 functions as the Proton donor in the catalytic mechanism. 300-306 is a substrate binding site; the sequence is ATTGRAR. Residues R306, 332–334, and 414–416 each bind GTP; these read KLD and STG.

This sequence belongs to the adenylosuccinate synthetase family. As to quaternary structure, homodimer. The cofactor is Mg(2+).

It localises to the cytoplasm. The catalysed reaction is IMP + L-aspartate + GTP = N(6)-(1,2-dicarboxyethyl)-AMP + GDP + phosphate + 2 H(+). The protein operates within purine metabolism; AMP biosynthesis via de novo pathway; AMP from IMP: step 1/2. Functionally, plays an important role in the de novo pathway of purine nucleotide biosynthesis. Catalyzes the first committed step in the biosynthesis of AMP from IMP. In Pseudomonas aeruginosa (strain LESB58), this protein is Adenylosuccinate synthetase.